The chain runs to 229 residues: Lipoprotein-releasing system ATP-binding protein LolD 1 (229 aa).

One can recognise an ABC transporter domain in the interval 2-229; sequence LVVSELSKSY…VRRGRFGITA (228 aa). 38–45 contributes to the ATP binding site; sequence GPSGSGKT.

It belongs to the ABC transporter superfamily. Lipoprotein translocase (TC 3.A.1.125) family. In terms of assembly, the complex is composed of two ATP-binding proteins (LolD) and two transmembrane proteins (LolC and LolE).

The protein resides in the cell inner membrane. In terms of biological role, part of the ABC transporter complex LolCDE involved in the translocation of mature outer membrane-directed lipoproteins, from the inner membrane to the periplasmic chaperone, LolA. Responsible for the formation of the LolA-lipoprotein complex in an ATP-dependent manner. The polypeptide is Lipoprotein-releasing system ATP-binding protein LolD 1 (Rhodopirellula baltica (strain DSM 10527 / NCIMB 13988 / SH1)).